The following is a 69-amino-acid chain: Large ribosomal subunit protein bL31 (69 aa).

The protein belongs to the bacterial ribosomal protein bL31 family. Type A subfamily. As to quaternary structure, part of the 50S ribosomal subunit.

Functionally, binds the 23S rRNA. In Magnetococcus marinus (strain ATCC BAA-1437 / JCM 17883 / MC-1), this protein is Large ribosomal subunit protein bL31.